Consider the following 216-residue polypeptide: Ras-related protein Rab-5C (216 aa).

10 residues coordinate GTP: S30, A31, G33, K34, S35, S36, H47, E48, T53, and G79. Position 35 (S35) interacts with Mg(2+). 2 short sequence motifs (switch) span residues 45–57 (QFHE…IGAA) and 78–94 (AGQE…YRGA). Residue T53 coordinates Mg(2+). S85 is subject to Phosphoserine. Positions 134, 135, 137, 165, and 166 each coordinate GTP. Residues 185-216 (NEPQNAAGAPGRNRGVDLQENNPASRSQCCSN) form a disordered region. The span at 203–216 (QENNPASRSQCCSN) shows a compositional bias: polar residues. S-geranylgeranyl cysteine attachment occurs at residues C213 and C214.

The protein belongs to the small GTPase superfamily. Rab family. As to quaternary structure, interacts with EEA1 and INCA1. Interacts with GDI1, GDI2, CHML and CHM; phosphorylation at Ser-85 disrupts this interaction. The cofactor is Mg(2+). Phosphorylation of Ser-85 in the switch II region by LRRK2 prevents the association of RAB regulatory proteins, including CHM, CHML and RAB GDP dissociation inhibitors GDI1 and GDI2.

It is found in the cell membrane. The protein localises to the early endosome membrane. Its subcellular location is the melanosome. The catalysed reaction is GTP + H2O = GDP + phosphate + H(+). Its activity is regulated as follows. Regulated by guanine nucleotide exchange factors (GEFs) which promote the exchange of bound GDP for free GTP. Regulated by GTPase activating proteins (GAPs) which increase the GTP hydrolysis activity. Inhibited by GDP dissociation inhibitors (GDIs). In terms of biological role, the small GTPases Rab are key regulators of intracellular membrane trafficking, from the formation of transport vesicles to their fusion with membranes. Rabs cycle between an inactive GDP-bound form and an active GTP-bound form that is able to recruit to membranes different sets of downstream effectors directly responsible for vesicle formation, movement, tethering and fusion. This Bos taurus (Bovine) protein is Ras-related protein Rab-5C (RAB5C).